A 224-amino-acid polypeptide reads, in one-letter code: Uracil phosphoribosyltransferase (224 aa).

Residue arginine 92 coordinates 5-phospho-alpha-D-ribose 1-diphosphate. A GTP-binding site is contributed by lysine 109. 5-phospho-alpha-D-ribose 1-diphosphate contacts are provided by residues arginine 117 and 145–153 (DPMLATGGT). Uracil is bound by residues isoleucine 210 and 215 to 217 (GDA). Residue aspartate 216 coordinates 5-phospho-alpha-D-ribose 1-diphosphate.

It belongs to the UPRTase family. The cofactor is Mg(2+).

It carries out the reaction UMP + diphosphate = 5-phospho-alpha-D-ribose 1-diphosphate + uracil. It functions in the pathway pyrimidine metabolism; UMP biosynthesis via salvage pathway; UMP from uracil: step 1/1. With respect to regulation, allosterically activated by GTP. In terms of biological role, catalyzes the conversion of uracil and 5-phospho-alpha-D-ribose 1-diphosphate (PRPP) to UMP and diphosphate. This chain is Uracil phosphoribosyltransferase (UPP), found in Nicotiana tabacum (Common tobacco).